The primary structure comprises 222 residues: Thiamine-phosphate synthase (222 aa).

4-amino-2-methyl-5-(diphosphooxymethyl)pyrimidine contacts are provided by residues 40-44 (QLRDK) and Asn81. Mg(2+) is bound by residues Asp82 and Asp101. Position 120 (Ser120) interacts with 4-amino-2-methyl-5-(diphosphooxymethyl)pyrimidine. 146-148 (TPT) provides a ligand contact to 2-[(2R,5Z)-2-carboxy-4-methylthiazol-5(2H)-ylidene]ethyl phosphate. Lys149 lines the 4-amino-2-methyl-5-(diphosphooxymethyl)pyrimidine pocket. Residue Gly178 coordinates 2-[(2R,5Z)-2-carboxy-4-methylthiazol-5(2H)-ylidene]ethyl phosphate.

It belongs to the thiamine-phosphate synthase family. Mg(2+) serves as cofactor.

The enzyme catalyses 2-[(2R,5Z)-2-carboxy-4-methylthiazol-5(2H)-ylidene]ethyl phosphate + 4-amino-2-methyl-5-(diphosphooxymethyl)pyrimidine + 2 H(+) = thiamine phosphate + CO2 + diphosphate. The catalysed reaction is 2-(2-carboxy-4-methylthiazol-5-yl)ethyl phosphate + 4-amino-2-methyl-5-(diphosphooxymethyl)pyrimidine + 2 H(+) = thiamine phosphate + CO2 + diphosphate. It catalyses the reaction 4-methyl-5-(2-phosphooxyethyl)-thiazole + 4-amino-2-methyl-5-(diphosphooxymethyl)pyrimidine + H(+) = thiamine phosphate + diphosphate. Its pathway is cofactor biosynthesis; thiamine diphosphate biosynthesis; thiamine phosphate from 4-amino-2-methyl-5-diphosphomethylpyrimidine and 4-methyl-5-(2-phosphoethyl)-thiazole: step 1/1. Condenses 4-methyl-5-(beta-hydroxyethyl)thiazole monophosphate (THZ-P) and 2-methyl-4-amino-5-hydroxymethyl pyrimidine pyrophosphate (HMP-PP) to form thiamine monophosphate (TMP). This chain is Thiamine-phosphate synthase, found in Mycobacterium tuberculosis (strain ATCC 25177 / H37Ra).